Here is a 984-residue protein sequence, read N- to C-terminus: Pre-mRNA-splicing factor cwf10 (984 aa).

Residues 1 to 28 (MMEEDLYDEFGNYIGPENEEDEEELFPQ) are disordered. Residues 139–402 (DDVRSFIVAG…HTLTISDEAE (264 aa)) form the tr-type G domain. The segment at 148-155 (GHLHHGKS) is G1. GTP is bound at residue 148–155 (GHLHHGKS). Positions 190–194 (VMSIK) are G2. Residues 216–219 (DTPG) form a G3 region. GTP is bound by residues 216-220 (DTPGH) and 270-273 (NKVD). Residues 270–273 (NKVD) form a G4 region. A G5 region spans residues 371–373 (QSL).

The protein belongs to the TRAFAC class translation factor GTPase superfamily. Classic translation factor GTPase family. EF-G/EF-2 subfamily. As to quaternary structure, belongs to the 40S cdc5-associated complex (or cwf complex), a spliceosome sub-complex reminiscent of a late-stage spliceosome composed of the U2, U5 and U6 snRNAs and at least brr2, cdc5, cwf2/prp3, cwf3/syf1, cwf4/syf3, cwf5/ecm2, spp42/cwf6, cwf7/spf27, cwf8, cwf9, cwf10, cwf11, cwf12, prp45/cwf13, cwf14, cwf15, cwf16, cwf17, cwf18, cwf19, cwf20, cwf21, cwf22, cwf23, cwf24, cwf25, cwf26, cyp7/cwf27, cwf28, cwf29/ist3, lea1, msl1, prp5/cwf1, prp10, prp12/sap130, prp17, prp22, sap61, sap62, sap114, sap145, slu7, smb1, smd1, smd3, smf1, smg1 and syf2.

The protein resides in the cytoplasm. The protein localises to the nucleus. In terms of biological role, component of the U5 snRNP complex required for pre-mRNA splicing. Binds GTP. The sequence is that of Pre-mRNA-splicing factor cwf10 (cwf10) from Schizosaccharomyces pombe (strain 972 / ATCC 24843) (Fission yeast).